A 575-amino-acid chain; its full sequence is Urease subunit alpha (575 aa).

One can recognise a Urease domain in the interval 138–575; that stretch reads GAVDCHVHLI…LPMAQRYFLF (438 aa). Positions 143, 145, and 226 each coordinate Ni(2+). N6-carboxylysine is present on Lys-226. His-228 is a binding site for substrate. Ni(2+) contacts are provided by His-255 and His-281. His-329 (proton donor) is an active-site residue. Asp-369 is a Ni(2+) binding site.

Belongs to the metallo-dependent hydrolases superfamily. Urease alpha subunit family. In terms of assembly, heterotrimer of UreA (gamma), UreB (beta) and UreC (alpha) subunits. Three heterotrimers associate to form the active enzyme. The cofactor is Ni cation. Post-translationally, carboxylation allows a single lysine to coordinate two nickel ions.

The protein resides in the cytoplasm. It carries out the reaction urea + 2 H2O + H(+) = hydrogencarbonate + 2 NH4(+). It participates in nitrogen metabolism; urea degradation; CO(2) and NH(3) from urea (urease route): step 1/1. The chain is Urease subunit alpha from Frankia alni (strain DSM 45986 / CECT 9034 / ACN14a).